Here is a 130-residue protein sequence, read N- to C-terminus: Iron-sulfur cluster insertion protein ErpA 2 (130 aa).

Iron-sulfur cluster-binding residues include C58, C122, and C124.

The protein belongs to the HesB/IscA family. Homodimer. Iron-sulfur cluster is required as a cofactor.

Required for insertion of 4Fe-4S clusters for at least IspG. This Methylococcus capsulatus (strain ATCC 33009 / NCIMB 11132 / Bath) protein is Iron-sulfur cluster insertion protein ErpA 2.